Reading from the N-terminus, the 315-residue chain is ADP-L-glycero-D-manno-heptose-6-epimerase (315 aa).

NADP(+) is bound by residues 10–11 (FI), 31–32 (DD), K38, K53, 76–80 (QGACS), and N93. Residue Y140 is the Proton acceptor of the active site. K144 contacts NADP(+). Residue N169 participates in substrate binding. 2 residues coordinate NADP(+): V170 and K178. K178 functions as the Proton acceptor in the catalytic mechanism. Substrate-binding positions include S180, H187, 201–204 (FEGC), R214, and Y278.

Belongs to the NAD(P)-dependent epimerase/dehydratase family. HldD subfamily. As to quaternary structure, homopentamer. NADP(+) serves as cofactor.

It carries out the reaction ADP-D-glycero-beta-D-manno-heptose = ADP-L-glycero-beta-D-manno-heptose. Its pathway is nucleotide-sugar biosynthesis; ADP-L-glycero-beta-D-manno-heptose biosynthesis; ADP-L-glycero-beta-D-manno-heptose from D-glycero-beta-D-manno-heptose 7-phosphate: step 4/4. Functionally, catalyzes the interconversion between ADP-D-glycero-beta-D-manno-heptose and ADP-L-glycero-beta-D-manno-heptose via an epimerization at carbon 6 of the heptose. This chain is ADP-L-glycero-D-manno-heptose-6-epimerase, found in Syntrophotalea carbinolica (strain DSM 2380 / NBRC 103641 / GraBd1) (Pelobacter carbinolicus).